A 296-amino-acid chain; its full sequence is Endochitinase 3 (296 aa).

The GH18 domain maps to histidine 12–aspartate 296. 2 N-linked (GlcNAc...) asparagine glycosylation sites follow: asparagine 32 and asparagine 152. Glutamate 153 functions as the Proton donor in the catalytic mechanism. Residue asparagine 228 is glycosylated (N-linked (GlcNAc...) asparagine).

The protein belongs to the glycosyl hydrolase 18 family. Chitinase class III subfamily.

It localises to the secreted. The catalysed reaction is Random endo-hydrolysis of N-acetyl-beta-D-glucosaminide (1-&gt;4)-beta-linkages in chitin and chitodextrins.. Functionally, secreted chitinase involved in the degradation of chitin, a component of the cell walls of fungi and exoskeletal elements of some animals (including worms and arthropods). Participates in the infection process and directly acts in the penetration process of the host cuticle. Involved in heat-shock adaptation. This chain is Endochitinase 3 (chi3), found in Metarhizium anisopliae (Entomophthora anisopliae).